The following is a 472-amino-acid chain: ATP synthase subunit beta (472 aa).

157–164 (GGAGVGKT) lines the ATP pocket.

This sequence belongs to the ATPase alpha/beta chains family. F-type ATPases have 2 components, CF(1) - the catalytic core - and CF(0) - the membrane proton channel. CF(1) has five subunits: alpha(3), beta(3), gamma(1), delta(1), epsilon(1). CF(0) has three main subunits: a(1), b(2) and c(9-12). The alpha and beta chains form an alternating ring which encloses part of the gamma chain. CF(1) is attached to CF(0) by a central stalk formed by the gamma and epsilon chains, while a peripheral stalk is formed by the delta and b chains.

The protein resides in the cell membrane. The enzyme catalyses ATP + H2O + 4 H(+)(in) = ADP + phosphate + 5 H(+)(out). Produces ATP from ADP in the presence of a proton gradient across the membrane. The catalytic sites are hosted primarily by the beta subunits. The protein is ATP synthase subunit beta of Desulforudis audaxviator (strain MP104C).